A 362-amino-acid polypeptide reads, in one-letter code: Peptide chain release factor 1 (362 aa).

Glutamine 237 bears the N5-methylglutamine mark. Basic and acidic residues predominate over residues 285 to 295 (EEKRHAEEAST). The tract at residues 285-311 (EEKRHAEEASTRRNLLGSGDRSDRIRT) is disordered.

This sequence belongs to the prokaryotic/mitochondrial release factor family. In terms of processing, methylated by PrmC. Methylation increases the termination efficiency of RF1.

It is found in the cytoplasm. In terms of biological role, peptide chain release factor 1 directs the termination of translation in response to the peptide chain termination codons UAG and UAA. This Photobacterium profundum (strain SS9) protein is Peptide chain release factor 1.